Consider the following 275-residue polypeptide: Multivesicular body subunit 12A (275 aa).

The 141-residue stretch at 5–145 (STPITGLAWI…GLVFWCRKGS (141 aa)) folds into the MABP domain. An SH3-binding motif is present at residues 151–156 (PTPKPR). Residues 216–267 (IDGIPFTIHPMFENTINNSSVAASDFRDLHIKTLSEIESEYNYGFVVEKTAA) enclose the UMA domain.

The protein belongs to the MVB12 family. In terms of assembly, component of the ESCRT-I complex (endosomal sorting complex required for transport I).

The protein resides in the cytoplasm. Its subcellular location is the endosome. It localises to the late endosome membrane. Functionally, component of the ESCRT-I complex, a regulator of vesicular trafficking process. Required for the sorting of endocytic ubiquitinated cargos into multivesicular bodies. The chain is Multivesicular body subunit 12A (mvb12a) from Xenopus laevis (African clawed frog).